The following is a 339-amino-acid chain: Ribosomal RNA small subunit methyltransferase H (339 aa).

S-adenosyl-L-methionine contacts are provided by residues 40–42 (GGY), D58, F85, D106, and Q113.

Belongs to the methyltransferase superfamily. RsmH family.

It is found in the cytoplasm. The catalysed reaction is cytidine(1402) in 16S rRNA + S-adenosyl-L-methionine = N(4)-methylcytidine(1402) in 16S rRNA + S-adenosyl-L-homocysteine + H(+). Its function is as follows. Specifically methylates the N4 position of cytidine in position 1402 (C1402) of 16S rRNA. This is Ribosomal RNA small subunit methyltransferase H from Parvibaculum lavamentivorans (strain DS-1 / DSM 13023 / NCIMB 13966).